The sequence spans 186 residues: T-cell receptor-associated transmembrane adapter 1 (186 aa).

The Extracellular portion of the chain corresponds to 1–7 (MSGISGC). Residues 8–28 (PFFLWGLLALLGLALVISLIF) form a helical; Signal-anchor for type III membrane protein membrane-spanning segment. The Cytoplasmic segment spans residues 29 to 186 (NISHYVEKQR…LIRAKREPIN (158 aa)). Serine 46 carries the phosphoserine modification. Tyrosine 79 bears the Phosphotyrosine mark. Residues 79-82 (YEQM) form an interaction with PIK3R1 region. Positions 116 to 140 (SVKGKRRKPRKQNTHFSDKDGDEQL) are disordered. The segment covering 118-128 (KGKRRKPRKQN) has biased composition (basic residues). Residues 131–140 (FSDKDGDEQL) show a composition bias toward basic and acidic residues.

Homodimer; disulfide-linked. Interacts with CD3Z. When phosphorylated, interacts with PIK3R1. Phosphorylated on tyrosines by LCK or FYN upon TCR activation. Strongly expressed in thymus, and to a lesser extent in spleen, lymph node and peripheral blood lymphocytes. Present in T-cells and NK cells, but not B-cells (at protein level).

Its subcellular location is the cell membrane. Stabilizes the TCR (T-cell antigen receptor)/CD3 complex at the surface of T-cells. The protein is T-cell receptor-associated transmembrane adapter 1 (TRAT1) of Homo sapiens (Human).